The chain runs to 282 residues: MTKLHKYLPQRTLSKIVGWLATREWGLLTQWAIRLFIRHYGINMQEAQYPDIGHYPSFNAFFTRYLKRELRPVVEEPLAIASPVDGIISEMGQIKGENLIQAKNHHYTITALLGEDPSRASQFLDGDFFTAYLAPKNYHRIHMPLDGRLIEMIHIPGKLFSVNPASVQTVPRLFARNERAVCLFETENGLMAVILVGAMLVGSINTVWHGTVVPTAEGIAVHNYREKNIKFKRGEEIGHFKMGSTVILLFPKNTIQWNPNCQPKGTICYGENIGTVSLIEVA.

Catalysis depends on charge relay system; for autoendoproteolytic cleavage activity residues Asp-85, His-142, and Ser-244. Residue Ser-244 is the Schiff-base intermediate with substrate; via pyruvic acid; for decarboxylase activity of the active site. Ser-244 carries the pyruvic acid (Ser); by autocatalysis modification.

Belongs to the phosphatidylserine decarboxylase family. PSD-B subfamily. Prokaryotic type I sub-subfamily. Heterodimer of a large membrane-associated beta subunit and a small pyruvoyl-containing alpha subunit. The cofactor is pyruvate. In terms of processing, is synthesized initially as an inactive proenzyme. Formation of the active enzyme involves a self-maturation process in which the active site pyruvoyl group is generated from an internal serine residue via an autocatalytic post-translational modification. Two non-identical subunits are generated from the proenzyme in this reaction, and the pyruvate is formed at the N-terminus of the alpha chain, which is derived from the carboxyl end of the proenzyme. The autoendoproteolytic cleavage occurs by a canonical serine protease mechanism, in which the side chain hydroxyl group of the serine supplies its oxygen atom to form the C-terminus of the beta chain, while the remainder of the serine residue undergoes an oxidative deamination to produce ammonia and the pyruvoyl prosthetic group on the alpha chain. During this reaction, the Ser that is part of the protease active site of the proenzyme becomes the pyruvoyl prosthetic group, which constitutes an essential element of the active site of the mature decarboxylase.

It is found in the cell membrane. It carries out the reaction a 1,2-diacyl-sn-glycero-3-phospho-L-serine + H(+) = a 1,2-diacyl-sn-glycero-3-phosphoethanolamine + CO2. The protein operates within phospholipid metabolism; phosphatidylethanolamine biosynthesis; phosphatidylethanolamine from CDP-diacylglycerol: step 2/2. Its function is as follows. Catalyzes the formation of phosphatidylethanolamine (PtdEtn) from phosphatidylserine (PtdSer). The sequence is that of Phosphatidylserine decarboxylase proenzyme from Coxiella burnetii (strain Dugway 5J108-111).